Consider the following 858-residue polypeptide: Conidiophore development regulator abaA (858 aa).

Positions 1-22 (MSSSLYHPRPVLSSQRYTPSPD) are disordered. A DNA-binding region (TEA) is located at residues 128–221 (QKDKGGVWRR…QVVKKFFEDL (94 aa)). The segment covering 500-522 (VEHQRKKEKRTKGDDRKNLDRAG) has biased composition (basic and acidic residues). Disordered stretches follow at residues 500 to 535 (VEHQ…GDAA) and 792 to 858 (TGAG…AGGW). The Nuclear localization signal signature appears at 514-521 (DRKNLDRA). The span at 809–822 (SSDQTALWTQSQWA) shows a compositional bias: polar residues.

It belongs to the TEC1 family.

Its subcellular location is the nucleus. Its function is as follows. AbaA and wetA are pivotal regulators of conidiophore development and conidium maturation. They act individually and together to regulate their own expression and that of numerous other sporulation-specific genes. Binds to the sequence 5'-CATTCY-3', where Y is a pyrimidine, making both major- and minor-groove contacts. Plays a pivotal role in conidiation by regulating cell cycle pathways and other conidiation-related genes. This is Conidiophore development regulator abaA from Gibberella zeae (strain ATCC MYA-4620 / CBS 123657 / FGSC 9075 / NRRL 31084 / PH-1) (Wheat head blight fungus).